We begin with the raw amino-acid sequence, 296 residues long: Formamidopyrimidine-DNA glycosylase (296 aa).

Pro2 functions as the Schiff-base intermediate with DNA in the catalytic mechanism. Glu3 (proton donor) is an active-site residue. Lys61 (proton donor; for beta-elimination activity) is an active-site residue. DNA-binding residues include His95, Arg122, and Lys169. The segment at 255-289 (NAYGRNDQPCARCGTPIQRETFMNRSSYSCPRCQP) adopts an FPG-type zinc-finger fold. The Proton donor; for delta-elimination activity role is filled by Arg279.

The protein belongs to the FPG family. In terms of assembly, monomer. Zn(2+) serves as cofactor.

It carries out the reaction Hydrolysis of DNA containing ring-opened 7-methylguanine residues, releasing 2,6-diamino-4-hydroxy-5-(N-methyl)formamidopyrimidine.. The enzyme catalyses 2'-deoxyribonucleotide-(2'-deoxyribose 5'-phosphate)-2'-deoxyribonucleotide-DNA = a 3'-end 2'-deoxyribonucleotide-(2,3-dehydro-2,3-deoxyribose 5'-phosphate)-DNA + a 5'-end 5'-phospho-2'-deoxyribonucleoside-DNA + H(+). Its function is as follows. Involved in base excision repair of DNA damaged by oxidation or by mutagenic agents. Acts as a DNA glycosylase that recognizes and removes damaged bases. Has a preference for oxidized purines, such as 7,8-dihydro-8-oxoguanine (8-oxoG). Has AP (apurinic/apyrimidinic) lyase activity and introduces nicks in the DNA strand. Cleaves the DNA backbone by beta-delta elimination to generate a single-strand break at the site of the removed base with both 3'- and 5'-phosphates. The polypeptide is Formamidopyrimidine-DNA glycosylase (Thermobifida fusca (strain YX)).